The chain runs to 278 residues: Biotin synthase (278 aa).

The Radical SAM core domain maps to 1-227 (MQIMLCAISN…QSVVMVAGGR (227 aa)). Residues Cys16, Cys20, and Cys23 each contribute to the [4Fe-4S] cluster site. Residues Cys60, Cys95, and Cys153 each coordinate [2Fe-2S] cluster.

Belongs to the radical SAM superfamily. Biotin synthase family. As to quaternary structure, homodimer. [4Fe-4S] cluster serves as cofactor. Requires [2Fe-2S] cluster as cofactor.

It carries out the reaction (4R,5S)-dethiobiotin + (sulfur carrier)-SH + 2 reduced [2Fe-2S]-[ferredoxin] + 2 S-adenosyl-L-methionine = (sulfur carrier)-H + biotin + 2 5'-deoxyadenosine + 2 L-methionine + 2 oxidized [2Fe-2S]-[ferredoxin]. It functions in the pathway cofactor biosynthesis; biotin biosynthesis; biotin from 7,8-diaminononanoate: step 2/2. Catalyzes the conversion of dethiobiotin (DTB) to biotin by the insertion of a sulfur atom into dethiobiotin via a radical-based mechanism. In Campylobacter jejuni subsp. doylei (strain ATCC BAA-1458 / RM4099 / 269.97), this protein is Biotin synthase.